The sequence spans 78 residues: Acyl carrier protein (78 aa).

A Carrier domain is found at 2–77 (STIEERVKKI…AAIDYINGHQ (76 aa)). The residue at position 37 (serine 37) is an O-(pantetheine 4'-phosphoryl)serine.

The protein belongs to the acyl carrier protein (ACP) family. 4'-phosphopantetheine is transferred from CoA to a specific serine of apo-ACP by AcpS. This modification is essential for activity because fatty acids are bound in thioester linkage to the sulfhydryl of the prosthetic group.

It is found in the cytoplasm. It participates in lipid metabolism; fatty acid biosynthesis. Carrier of the growing fatty acid chain in fatty acid biosynthesis. The protein is Acyl carrier protein of Shigella flexneri.